The primary structure comprises 225 residues: 7-cyano-7-deazaguanine synthase (225 aa).

Leu9–Leu19 is an ATP binding site. Cys189, Cys199, Cys202, and Cys205 together coordinate Zn(2+).

Belongs to the QueC family. Zn(2+) serves as cofactor.

The enzyme catalyses 7-carboxy-7-deazaguanine + NH4(+) + ATP = 7-cyano-7-deazaguanine + ADP + phosphate + H2O + H(+). It participates in purine metabolism; 7-cyano-7-deazaguanine biosynthesis. In terms of biological role, catalyzes the ATP-dependent conversion of 7-carboxy-7-deazaguanine (CDG) to 7-cyano-7-deazaguanine (preQ(0)). The protein is 7-cyano-7-deazaguanine synthase of Dechloromonas aromatica (strain RCB).